A 528-amino-acid chain; its full sequence is Probable serine/threonine-protein kinase DDB_G0282417 (528 aa).

Positions 49-77 are enriched in low complexity; it reads NNNNNNNNNNNNNNNNNNNNNNNNNNKNN. The interval 49–84 is disordered; it reads NNNNNNNNNNNNNNNNNNNNNNNNNNKNNNDGDDAA. The Protein kinase domain occupies 136-466; the sequence is QQNRVLIGEG…ESLINNHQYS (331 aa). ATP is bound by residues 142-150 and K166; that span reads IGEGHYGKV. D266 acts as the Proton acceptor in catalysis.

It belongs to the protein kinase superfamily. Ser/Thr protein kinase family.

The enzyme catalyses L-seryl-[protein] + ATP = O-phospho-L-seryl-[protein] + ADP + H(+). It carries out the reaction L-threonyl-[protein] + ATP = O-phospho-L-threonyl-[protein] + ADP + H(+). This chain is Probable serine/threonine-protein kinase DDB_G0282417, found in Dictyostelium discoideum (Social amoeba).